The sequence spans 701 residues: Pentatricopeptide repeat-containing protein At5g50390, chloroplastic (701 aa).

A chloroplast-targeting transit peptide spans 1-47 (MEIPLSRYQSIRLDEIRDSSSNPKVLTFPRKFSLRGRRWKNPFGRLS). 12 PPR repeats span residues 86 to 116 (SGVT…LEIR), 122 to 156 (GVST…GFEP), 157 to 187 (EQYM…IPER), 188 to 218 (NLYS…MWEE), 223 to 257 (ETHT…GVVD), 258 to 288 (NTFV…MPEK), 289 to 323 (TTVA…GVSI), 324 to 358 (DQFT…GFES), 359 to 389 (EIVA…LPRK), 390 to 424 (NIIS…NVAP), 425 to 460 (NHVT…GIKP), and 461 to 491 (RAMH…APLK). The type E motif stretch occupies residues 496–571 (MWAALLNACR…MPACTWVEVG (76 aa)). The tract at residues 572 to 606 (DQTHSFLSGDRFDSYNETVKRQIYQKVDELMEEIS) is type E(+) motif; degenerate. Residues 607-701 (EYGYSEEEQH…EGKCSCGGYW (95 aa)) are type DYW motif.

Belongs to the PPR family. PCMP-H subfamily.

The protein resides in the plastid. It localises to the chloroplast. This Arabidopsis thaliana (Mouse-ear cress) protein is Pentatricopeptide repeat-containing protein At5g50390, chloroplastic (PCMP-H58).